Here is a 220-residue protein sequence, read N- to C-terminus: Pyridoxine/pyridoxamine 5'-phosphate oxidase (220 aa).

FMN is bound by residues 69–74, 84–85, R90, K91, and Q113; these read RVVLLK and YT. K74 contacts substrate. The substrate site is built by Y131, R135, and S139. FMN is bound by residues 148 to 149 and W193; that span reads QS. Position 199-201 (199-201) interacts with substrate; the sequence is RLH. R203 lines the FMN pocket.

Belongs to the pyridoxamine 5'-phosphate oxidase family. In terms of assembly, homodimer. The cofactor is FMN.

It carries out the reaction pyridoxamine 5'-phosphate + O2 + H2O = pyridoxal 5'-phosphate + H2O2 + NH4(+). The catalysed reaction is pyridoxine 5'-phosphate + O2 = pyridoxal 5'-phosphate + H2O2. It participates in cofactor metabolism; pyridoxal 5'-phosphate salvage; pyridoxal 5'-phosphate from pyridoxamine 5'-phosphate: step 1/1. The protein operates within cofactor metabolism; pyridoxal 5'-phosphate salvage; pyridoxal 5'-phosphate from pyridoxine 5'-phosphate: step 1/1. In terms of biological role, catalyzes the oxidation of either pyridoxine 5'-phosphate (PNP) or pyridoxamine 5'-phosphate (PMP) into pyridoxal 5'-phosphate (PLP). The polypeptide is Pyridoxine/pyridoxamine 5'-phosphate oxidase (Myxococcus xanthus).